The following is an 88-amino-acid chain: Small ribosomal subunit protein uS15 (88 aa).

This sequence belongs to the universal ribosomal protein uS15 family. Part of the 30S ribosomal subunit. Forms a bridge to the 50S subunit in the 70S ribosome, contacting the 23S rRNA.

One of the primary rRNA binding proteins, it binds directly to 16S rRNA where it helps nucleate assembly of the platform of the 30S subunit by binding and bridging several RNA helices of the 16S rRNA. In terms of biological role, forms an intersubunit bridge (bridge B4) with the 23S rRNA of the 50S subunit in the ribosome. This is Small ribosomal subunit protein uS15 from Trichlorobacter lovleyi (strain ATCC BAA-1151 / DSM 17278 / SZ) (Geobacter lovleyi).